Here is a 284-residue protein sequence, read N- to C-terminus: F-box only protein 6 (284 aa).

An F-box domain is found at 1–48 (MVNINELPENILLELFTHVPAPQLLRNCRLVCSLWRDLIDVMTLWKRK). The FBA domain occupies 69 to 250 (FYILCSLQRN…VTNSSIIVSH (182 aa)). Residues serine 249, serine 268, serine 275, serine 278, and serine 283 each carry the phosphoserine modification.

Part of a SCF (SKP1-cullin-F-box) protein ligase complex. Interacts with VCP, CHEK1 and CUL1.

The protein localises to the cytoplasm. It participates in protein modification; protein ubiquitination. In terms of biological role, substrate-recognition component of some SCF (SKP1-CUL1-F-box protein)-type E3 ubiquitin ligase complexes. Involved in endoplasmic reticulum-associated degradation pathway (ERAD) for misfolded lumenal proteins by recognizing and binding sugar chains on unfolded glycoproteins that are retrotranslocated into the cytosol and promoting their ubiquitination and subsequent degradation. Able to recognize and bind denatured glycoproteins, which are modified with not only high-mannose but also complex-type oligosaccharides. Also recognizes sulfated glycans. Also involved in DNA damage response by specifically recognizing activated CHEK1 (phosphorylated on 'Ser-345'), promoting its ubiquitination and degradation. Ubiquitination of CHEK1 is required to ensure that activated CHEK1 does not accumulate as cells progress through S phase, or when replication forks encounter transient impediments during normal DNA replication. The chain is F-box only protein 6 (Fbxo6) from Rattus norvegicus (Rat).